Reading from the N-terminus, the 426-residue chain is UPF0164 protein TP_0548 (426 aa).

The N-terminal stretch at 1 to 37 is a signal peptide; that stretch reads MISCSVRRRPRWEPQVGAAFLAFALLPVLASGRGMQA.

The protein belongs to the UPF0164 family.

The chain is UPF0164 protein TP_0548 from Treponema pallidum (strain Nichols).